Consider the following 190-residue polypeptide: Holliday junction branch migration complex subunit RuvA (190 aa).

The tract at residues 1–65 is domain I; sequence MIGNLSGIVD…ENVAQLYGFI (65 aa). Residues 66–143 form a domain II region; sequence SKEEQQCLRL…KLEINNNNFH (78 aa). The tract at residues 144–147 is flexible linker; sequence PINE. The tract at residues 147–190 is domain III; that stretch reads EDALSALINLGYEKMKAYDTIKKYRPNLDTKDIIRMALKELSIL.

It belongs to the RuvA family. As to quaternary structure, homotetramer. Forms an RuvA(8)-RuvB(12)-Holliday junction (HJ) complex. HJ DNA is sandwiched between 2 RuvA tetramers; dsDNA enters through RuvA and exits via RuvB. An RuvB hexamer assembles on each DNA strand where it exits the tetramer. Each RuvB hexamer is contacted by two RuvA subunits (via domain III) on 2 adjacent RuvB subunits; this complex drives branch migration. In the full resolvosome a probable DNA-RuvA(4)-RuvB(12)-RuvC(2) complex forms which resolves the HJ.

The protein resides in the cytoplasm. Functionally, the RuvA-RuvB-RuvC complex processes Holliday junction (HJ) DNA during genetic recombination and DNA repair, while the RuvA-RuvB complex plays an important role in the rescue of blocked DNA replication forks via replication fork reversal (RFR). RuvA specifically binds to HJ cruciform DNA, conferring on it an open structure. The RuvB hexamer acts as an ATP-dependent pump, pulling dsDNA into and through the RuvAB complex. HJ branch migration allows RuvC to scan DNA until it finds its consensus sequence, where it cleaves and resolves the cruciform DNA. In Wolbachia pipientis wMel, this protein is Holliday junction branch migration complex subunit RuvA.